Here is a 267-residue protein sequence, read N- to C-terminus: 4-hydroxy-tetrahydrodipicolinate reductase (267 aa).

Residues 12 to 17, D38, 100 to 102, and 126 to 129 contribute to the NAD(+) site; these read GARGRM, GTT, and APNF. The Proton donor/acceptor role is filled by H156. H157 contributes to the (S)-2,3,4,5-tetrahydrodipicolinate binding site. K160 acts as the Proton donor in catalysis. Residue 166–167 participates in (S)-2,3,4,5-tetrahydrodipicolinate binding; that stretch reads GT.

This sequence belongs to the DapB family.

Its subcellular location is the cytoplasm. It carries out the reaction (S)-2,3,4,5-tetrahydrodipicolinate + NAD(+) + H2O = (2S,4S)-4-hydroxy-2,3,4,5-tetrahydrodipicolinate + NADH + H(+). It catalyses the reaction (S)-2,3,4,5-tetrahydrodipicolinate + NADP(+) + H2O = (2S,4S)-4-hydroxy-2,3,4,5-tetrahydrodipicolinate + NADPH + H(+). Its pathway is amino-acid biosynthesis; L-lysine biosynthesis via DAP pathway; (S)-tetrahydrodipicolinate from L-aspartate: step 4/4. In terms of biological role, catalyzes the conversion of 4-hydroxy-tetrahydrodipicolinate (HTPA) to tetrahydrodipicolinate. In Bacillus pumilus (strain SAFR-032), this protein is 4-hydroxy-tetrahydrodipicolinate reductase.